A 269-amino-acid polypeptide reads, in one-letter code: Formamidopyrimidine-DNA glycosylase (269 aa).

Pro2 (schiff-base intermediate with DNA) is an active-site residue. Glu3 acts as the Proton donor in catalysis. Lys57 functions as the Proton donor; for beta-elimination activity in the catalytic mechanism. His90, Arg109, and Lys150 together coordinate DNA. Residues Gln235–Gln269 form an FPG-type zinc finger. The active-site Proton donor; for delta-elimination activity is the Arg259.

This sequence belongs to the FPG family. In terms of assembly, monomer. Zn(2+) is required as a cofactor.

The enzyme catalyses Hydrolysis of DNA containing ring-opened 7-methylguanine residues, releasing 2,6-diamino-4-hydroxy-5-(N-methyl)formamidopyrimidine.. The catalysed reaction is 2'-deoxyribonucleotide-(2'-deoxyribose 5'-phosphate)-2'-deoxyribonucleotide-DNA = a 3'-end 2'-deoxyribonucleotide-(2,3-dehydro-2,3-deoxyribose 5'-phosphate)-DNA + a 5'-end 5'-phospho-2'-deoxyribonucleoside-DNA + H(+). Functionally, involved in base excision repair of DNA damaged by oxidation or by mutagenic agents. Acts as a DNA glycosylase that recognizes and removes damaged bases. Has a preference for oxidized purines, such as 7,8-dihydro-8-oxoguanine (8-oxoG). Has AP (apurinic/apyrimidinic) lyase activity and introduces nicks in the DNA strand. Cleaves the DNA backbone by beta-delta elimination to generate a single-strand break at the site of the removed base with both 3'- and 5'-phosphates. This Photobacterium damsela subsp. piscicida (Pasteurella piscicida) protein is Formamidopyrimidine-DNA glycosylase.